A 287-amino-acid chain; its full sequence is Ribosomal RNA small subunit methyltransferase A (287 aa).

The S-adenosyl-L-methionine site is built by asparagine 28, leucine 30, glycine 55, glutamate 77, aspartate 103, and asparagine 123.

Belongs to the class I-like SAM-binding methyltransferase superfamily. rRNA adenine N(6)-methyltransferase family. RsmA subfamily.

It is found in the cytoplasm. The enzyme catalyses adenosine(1518)/adenosine(1519) in 16S rRNA + 4 S-adenosyl-L-methionine = N(6)-dimethyladenosine(1518)/N(6)-dimethyladenosine(1519) in 16S rRNA + 4 S-adenosyl-L-homocysteine + 4 H(+). Specifically dimethylates two adjacent adenosines (A1518 and A1519) in the loop of a conserved hairpin near the 3'-end of 16S rRNA in the 30S particle. May play a critical role in biogenesis of 30S subunits. In Nitrobacter winogradskyi (strain ATCC 25391 / DSM 10237 / CIP 104748 / NCIMB 11846 / Nb-255), this protein is Ribosomal RNA small subunit methyltransferase A.